The following is a 187-amino-acid chain: MWLIVGLGNPGGEYKLTRHNIGFMAVDFLMEGLGNPPIKNQFKAEIAQAKIKDHPVIFCKPQTYMNLSGESVQPLMGFYKIPLERLIVIHDEIDQPFAQMKIQKNRGHGGHNGIKSISGLMGSMDYTRLRLGVGRPANPNIPVPDYVLGKFTKEEFAQMPDFLNKAGDAVESIILDGIQKASTKFNT.

Residue Tyr-14 coordinates tRNA. His-19 serves as the catalytic Proton acceptor. TRNA is bound by residues Tyr-64, Asn-66, and Asn-112.

The protein belongs to the PTH family. In terms of assembly, monomer.

Its subcellular location is the cytoplasm. The catalysed reaction is an N-acyl-L-alpha-aminoacyl-tRNA + H2O = an N-acyl-L-amino acid + a tRNA + H(+). Functionally, hydrolyzes ribosome-free peptidyl-tRNAs (with 1 or more amino acids incorporated), which drop off the ribosome during protein synthesis, or as a result of ribosome stalling. In terms of biological role, catalyzes the release of premature peptidyl moieties from peptidyl-tRNA molecules trapped in stalled 50S ribosomal subunits, and thus maintains levels of free tRNAs and 50S ribosomes. This Bdellovibrio bacteriovorus (strain ATCC 15356 / DSM 50701 / NCIMB 9529 / HD100) protein is Peptidyl-tRNA hydrolase.